The following is a 189-amino-acid chain: Peptidyl-tRNA hydrolase (189 aa).

Tyrosine 15 contributes to the tRNA binding site. The active-site Proton acceptor is histidine 20. 3 residues coordinate tRNA: phenylalanine 66, asparagine 68, and asparagine 114.

This sequence belongs to the PTH family. In terms of assembly, monomer.

The protein localises to the cytoplasm. The enzyme catalyses an N-acyl-L-alpha-aminoacyl-tRNA + H2O = an N-acyl-L-amino acid + a tRNA + H(+). Its function is as follows. Hydrolyzes ribosome-free peptidyl-tRNAs (with 1 or more amino acids incorporated), which drop off the ribosome during protein synthesis, or as a result of ribosome stalling. Functionally, catalyzes the release of premature peptidyl moieties from peptidyl-tRNA molecules trapped in stalled 50S ribosomal subunits, and thus maintains levels of free tRNAs and 50S ribosomes. This is Peptidyl-tRNA hydrolase from Streptococcus gordonii (strain Challis / ATCC 35105 / BCRC 15272 / CH1 / DL1 / V288).